The primary structure comprises 349 residues: Core protein VP7 (349 aa).

The N-linked (GlcNAc...) asparagine; by host glycan is linked to asparagine 287.

The protein belongs to the orbivirus VP7 family. As to quaternary structure, homotrimer that assemble in a complex of 260 capsomers on an inner scaffold composed of VP3.

The protein resides in the virion. Its function is as follows. The VP7 protein is one of the five proteins (with VP1, VP3, VP4, and VP6) which form the inner capsid of the virus. The sequence is that of Core protein VP7 (Segment-7) from Antilocapra americana (Pronghorn).